The chain runs to 214 residues: Probable nicotinate-nucleotide adenylyltransferase (214 aa).

It belongs to the NadD family.

The enzyme catalyses nicotinate beta-D-ribonucleotide + ATP + H(+) = deamido-NAD(+) + diphosphate. The protein operates within cofactor biosynthesis; NAD(+) biosynthesis; deamido-NAD(+) from nicotinate D-ribonucleotide: step 1/1. Functionally, catalyzes the reversible adenylation of nicotinate mononucleotide (NaMN) to nicotinic acid adenine dinucleotide (NaAD). The sequence is that of Probable nicotinate-nucleotide adenylyltransferase from Rubrobacter xylanophilus (strain DSM 9941 / JCM 11954 / NBRC 16129 / PRD-1).